Reading from the N-terminus, the 644-residue chain is Major core protein OPG129 (644 aa).

Positions methionine 1–glycine 61 are excised as a propeptide. The segment at glycine 61–threonine 80 is disordered.

It belongs to the orthopoxvirus OPG129 family. The 73-kDa precursor is cleaved to a mature protein of 60 kDa during virion maturation. Proteolytic cleavage of major core proteins OPG129, OPG136, and OPG098, which occurs at a late stage of core formation, is required for production of infectious mature virions (MV).

The protein resides in the virion. Its function is as follows. Major component of the virion core that undergoes proteolytic processing during the immature virion (IV) to mature virion (MV) transition. Essential for the formation of a structurally normal core. This chain is Major core protein OPG129 (OPG129), found in Variola virus (isolate Human/India/Ind3/1967) (VARV).